The sequence spans 166 residues: Small ribosomal subunit protein uS5 (166 aa).

The S5 DRBM domain maps to 11 to 74; sequence LQEKLVQVNR…EAARKNMVDV (64 aa).

The protein belongs to the universal ribosomal protein uS5 family. Part of the 30S ribosomal subunit. Contacts proteins S4 and S8.

Its function is as follows. With S4 and S12 plays an important role in translational accuracy. Functionally, located at the back of the 30S subunit body where it stabilizes the conformation of the head with respect to the body. This chain is Small ribosomal subunit protein uS5, found in Marinobacter nauticus (strain ATCC 700491 / DSM 11845 / VT8) (Marinobacter aquaeolei).